The sequence spans 216 residues: RNA pyrophosphohydrolase (216 aa).

A Nudix hydrolase domain is found at 6-149; the sequence is GFRPNVGIIL…KRDVYQLALT (144 aa). Positions 38–59 match the Nudix box motif; it reads GGIKYGETPMQAMYRELHEETG. Positions 159–180 are disordered; that stretch reads AQRTDKSRGPRAPRYPRVSNGH.

The protein belongs to the Nudix hydrolase family. RppH subfamily. It depends on a divalent metal cation as a cofactor.

Its function is as follows. Accelerates the degradation of transcripts by removing pyrophosphate from the 5'-end of triphosphorylated RNA, leading to a more labile monophosphorylated state that can stimulate subsequent ribonuclease cleavage. This is RNA pyrophosphohydrolase from Burkholderia thailandensis (strain ATCC 700388 / DSM 13276 / CCUG 48851 / CIP 106301 / E264).